Here is a 362-residue protein sequence, read N- to C-terminus: 3-dehydroquinate synthase (362 aa).

NAD(+) is bound by residues 70–75 (EGEQYK), 104–108 (GVIGD), 128–129 (TT), Lys-141, Lys-150, and 168–171 (TLTT). Zn(2+)-binding residues include Glu-183, His-246, and His-263.

It belongs to the sugar phosphate cyclases superfamily. Dehydroquinate synthase family. Co(2+) is required as a cofactor. It depends on Zn(2+) as a cofactor. Requires NAD(+) as cofactor.

It is found in the cytoplasm. The catalysed reaction is 7-phospho-2-dehydro-3-deoxy-D-arabino-heptonate = 3-dehydroquinate + phosphate. It functions in the pathway metabolic intermediate biosynthesis; chorismate biosynthesis; chorismate from D-erythrose 4-phosphate and phosphoenolpyruvate: step 2/7. Functionally, catalyzes the conversion of 3-deoxy-D-arabino-heptulosonate 7-phosphate (DAHP) to dehydroquinate (DHQ). This is 3-dehydroquinate synthase from Histophilus somni (strain 2336) (Haemophilus somnus).